Reading from the N-terminus, the 1494-residue chain is Neuropathy target esterase sws (1494 aa).

At 1 to 35 the chain is on the lumenal side; it reads MDVLELLRVSGSNMYYSTFLADAWCYYISNQITMT. The helical transmembrane segment at 36 to 56 threads the bilayer; it reads MYLYCALGVLSMLFIGWFVYF. Residues 57 to 1494 are Cytoplasmic-facing; that stretch reads KRLARLRLRH…NTNNETKNYL (1438 aa). A nucleoside 3',5'-cyclic phosphate is bound at residue 176–303; that stretch reads IFGHFEKPIF…IRVIQVIMIR (128 aa). Low complexity predominate over residues 362 to 372; that stretch reads ASGTAGSTHTA. 2 disordered regions span residues 362–405 and 422–452; these read ASGT…ELSG and NSYP…QPEV. Residues 435–449 are compositionally biased toward polar residues; the sequence is GNLSTRRGSITQQEQ. Residue serine 443 is modified to Phosphoserine. Residues 474-601 and 590-717 contribute to the a nucleoside 3',5'-cyclic phosphate site; these read ELGL…VVRR and IVLD…LSHR. Positions 944-1110 constitute a PNPLA domain; it reads LVLGGGGARG…VNNLPGHLWR (167 aa). Positions 948 to 953 match the GXGXXG motif; that stretch reads GGGARG. The GXSXG motif lies at 975-979; that stretch reads GVSIG. The active-site Nucleophile is the serine 977. Aspartate 1097 acts as the Proton acceptor in catalysis. Residues 1097-1099 carry the DGA/G motif; sequence DGG. Residues 1367–1494 are disordered; sequence MDKATQSTPP…NTNNETKNYL (128 aa). A compositionally biased stretch (polar residues) spans 1370-1381; that stretch reads ATQSTPPLQSKA. Basic and acidic residues-rich tracts occupy residues 1389–1420 and 1452–1483; these read SKEE…RELS and MDKK…KENR. Residues 1484–1494 are compositionally biased toward polar residues; that stretch reads SNTNNETKNYL.

It belongs to the NTE family. In terms of assembly, interacts with Pka-C3; interaction inhibits the catalytic function of Pka-C3 and the esterase activity of sws.

The protein localises to the endoplasmic reticulum membrane. It catalyses the reaction a 1-acyl-sn-glycero-3-phosphocholine + H2O = sn-glycerol 3-phosphocholine + a fatty acid + H(+). Functionally, phospholipase B that deacylates intracellular phosphatidylcholine (PtdCho), generating glycerophosphocholine (GroPtdCho). This deacylation occurs at both sn-2 and sn-1 positions of PtdCho. Its specific chemical modification by certain organophosphorus (OP) compounds leads to distal axonopathy. Plays a role in the signaling mechanism between neurons and glia that regulates glia wrapping during development of the adult brain. Essential for membrane lipid homeostasis and cell survival in both neurons and glia of the adult brain. This chain is Neuropathy target esterase sws, found in Drosophila pseudoobscura pseudoobscura (Fruit fly).